We begin with the raw amino-acid sequence, 546 residues long: Hydroxylamine reductase (546 aa).

Cys3, Cys6, Cys18, and Cys25 together coordinate [4Fe-4S] cluster. Hybrid [4Fe-2O-2S] cluster-binding residues include His245, Glu269, Cys313, Cys401, Cys429, Cys454, Glu488, and Lys490. The residue at position 401 (Cys401) is a Cysteine persulfide.

The protein belongs to the HCP family. The cofactor is [4Fe-4S] cluster. Hybrid [4Fe-2O-2S] cluster serves as cofactor.

Its subcellular location is the cytoplasm. The enzyme catalyses A + NH4(+) + H2O = hydroxylamine + AH2 + H(+). With respect to regulation, inhibited by cyanide and by sulfide and iron reagents such as dithioerythritol, 2,2'-dipyridyl and o-phenanthroline. Could be involved in assimilation and/or detoxification of hydroxylamine, which is a toxic compound that may be formed during nitrate/nitrite assimilation. Catalyzes the reduction of hydroxylamine to form NH(3) and H(2)O. It has a low reductase activity with FAD, FMN, benzyl viologen and bromphenol blue as electrons donors, but it is not able to use NAD or NADP. The protein is Hydroxylamine reductase of Rhodobacter capsulatus (Rhodopseudomonas capsulata).